A 332-amino-acid polypeptide reads, in one-letter code: GTP 3',8-cyclase (332 aa).

A Radical SAM core domain is found at 9–220 (RFARKVDYLR…DQVRERIAER (212 aa)). Arg-18 contributes to the GTP binding site. The [4Fe-4S] cluster site is built by Cys-25 and Cys-29. Position 31 (Tyr-31) interacts with S-adenosyl-L-methionine. Cys-32 lines the [4Fe-4S] cluster pocket. Arg-67 provides a ligand contact to GTP. Gly-71 is an S-adenosyl-L-methionine binding site. Thr-98 is a binding site for GTP. Ser-122 provides a ligand contact to S-adenosyl-L-methionine. Lys-159 provides a ligand contact to GTP. Met-193 serves as a coordination point for S-adenosyl-L-methionine. [4Fe-4S] cluster contacts are provided by Cys-258 and Cys-261. Residue 263-265 (RVR) coordinates GTP. Residue Cys-275 coordinates [4Fe-4S] cluster.

Belongs to the radical SAM superfamily. MoaA family. As to quaternary structure, monomer and homodimer. Requires [4Fe-4S] cluster as cofactor.

The enzyme catalyses GTP + AH2 + S-adenosyl-L-methionine = (8S)-3',8-cyclo-7,8-dihydroguanosine 5'-triphosphate + 5'-deoxyadenosine + L-methionine + A + H(+). Its pathway is cofactor biosynthesis; molybdopterin biosynthesis. Catalyzes the cyclization of GTP to (8S)-3',8-cyclo-7,8-dihydroguanosine 5'-triphosphate. In Pseudomonas savastanoi pv. phaseolicola (strain 1448A / Race 6) (Pseudomonas syringae pv. phaseolicola (strain 1448A / Race 6)), this protein is GTP 3',8-cyclase.